Consider the following 261-residue polypeptide: Precorrin-6A reductase (261 aa).

This sequence belongs to the precorrin-6x reductase family.

The enzyme catalyses precorrin-6B + NADP(+) = precorrin-6A + NADPH + 2 H(+). Its pathway is cofactor biosynthesis; adenosylcobalamin biosynthesis; cob(II)yrinate a,c-diamide from precorrin-2 (aerobic route): step 6/10. In terms of biological role, catalyzes the reduction of the macrocycle of precorrin-6X into precorrin-6Y. The protein is Precorrin-6A reductase (cobK) of Sinorhizobium sp.